A 606-amino-acid polypeptide reads, in one-letter code: Vitamin B12 transporter BtuB (606 aa).

The first 22 residues, 1–22, serve as a signal peptide directing secretion; it reads MQKSLLAIAMASLLTPVSYLHA. The short motif at 29–36 is the TonB box element; the sequence is DTVVVTAN. The region spanning 41 to 153 is the TBDR plug domain; it reads PLAEVIASTT…IAGVINVITT (113 aa). The TBDR beta-barrel domain occupies 158-606; it reads SEGSVVSLGA…RYFANLTYQF (449 aa). The short motif at 589-606 is the TonB C-terminal box element; it reads LSYNAPERRYFANLTYQF.

The protein belongs to the TonB-dependent receptor family. BtuB (TC 1.B.14.3.1) subfamily.

It localises to the cell outer membrane. Its function is as follows. Involved in the active translocation of vitamin B12 (cyanocobalamin) across the outer membrane to the periplasmic space. It derives its energy for transport by interacting with the trans-periplasmic membrane protein TonB. This Vibrio vulnificus (strain CMCP6) protein is Vitamin B12 transporter BtuB.